Consider the following 215-residue polypeptide: Octanoyltransferase (215 aa).

The 177-residue stretch at 33–209 folds into the BPL/LPL catalytic domain; the sequence is PDTPDQLWLV…QFARKLGYET (177 aa). Residues 72–79, 139–141, and 152–154 each bind substrate; these read RGGQVTYH, SLG, and GLA. Catalysis depends on Cys170, which acts as the Acyl-thioester intermediate.

The protein belongs to the LipB family.

The protein localises to the cytoplasm. The enzyme catalyses octanoyl-[ACP] + L-lysyl-[protein] = N(6)-octanoyl-L-lysyl-[protein] + holo-[ACP] + H(+). The protein operates within protein modification; protein lipoylation via endogenous pathway; protein N(6)-(lipoyl)lysine from octanoyl-[acyl-carrier-protein]: step 1/2. Catalyzes the transfer of endogenously produced octanoic acid from octanoyl-acyl-carrier-protein onto the lipoyl domains of lipoate-dependent enzymes. Lipoyl-ACP can also act as a substrate although octanoyl-ACP is likely to be the physiological substrate. The protein is Octanoyltransferase of Cellvibrio japonicus (strain Ueda107) (Pseudomonas fluorescens subsp. cellulosa).